We begin with the raw amino-acid sequence, 171 residues long: S-ribosylhomocysteine lyase (171 aa).

Residues His-54, His-58, and Cys-128 each contribute to the Fe cation site.

Belongs to the LuxS family. In terms of assembly, homodimer. It depends on Fe cation as a cofactor.

It carries out the reaction S-(5-deoxy-D-ribos-5-yl)-L-homocysteine = (S)-4,5-dihydroxypentane-2,3-dione + L-homocysteine. In terms of biological role, involved in the synthesis of autoinducer 2 (AI-2) which is secreted by bacteria and is used to communicate both the cell density and the metabolic potential of the environment. The regulation of gene expression in response to changes in cell density is called quorum sensing. Catalyzes the transformation of S-ribosylhomocysteine (RHC) to homocysteine (HC) and 4,5-dihydroxy-2,3-pentadione (DPD). The protein is S-ribosylhomocysteine lyase of Klebsiella pneumoniae (strain 342).